Reading from the N-terminus, the 298-residue chain is Ribose-phosphate pyrophosphokinase (298 aa).

Residues 33 to 35 (DGE) and 91 to 92 (RQ) each bind ATP. Mg(2+) is bound by residues H125 and D164. K187 is an active-site residue. D-ribose 5-phosphate contacts are provided by R189 and D224.

The protein belongs to the ribose-phosphate pyrophosphokinase family. Class III (archaeal) subfamily. Mg(2+) is required as a cofactor.

It is found in the cytoplasm. The catalysed reaction is D-ribose 5-phosphate + ATP = 5-phospho-alpha-D-ribose 1-diphosphate + AMP + H(+). Its pathway is metabolic intermediate biosynthesis; 5-phospho-alpha-D-ribose 1-diphosphate biosynthesis; 5-phospho-alpha-D-ribose 1-diphosphate from D-ribose 5-phosphate (route I): step 1/1. Its function is as follows. Involved in the biosynthesis of the central metabolite phospho-alpha-D-ribosyl-1-pyrophosphate (PRPP) via the transfer of pyrophosphoryl group from ATP to 1-hydroxyl of ribose-5-phosphate (Rib-5-P). The polypeptide is Ribose-phosphate pyrophosphokinase (Methanobrevibacter smithii (strain ATCC 35061 / DSM 861 / OCM 144 / PS)).